We begin with the raw amino-acid sequence, 601 residues long: ATP-dependent lipid A-core flippase (601 aa).

The next 4 membrane-spanning stretches (helical) occupy residues 26–46 (VGLF…QPML), 82–102 (LMIV…NYFL), 167–187 (VFLF…MVAI), and 263–283 (VYTP…LFLV). Residues 30–321 (AVSILGYVIF…LSEVSSTIQR (292 aa)) form the ABC transmembrane type-1 domain. The 237-residue stretch at 353 to 589 (IEVRDLSFRY…GGHYARLHAM (237 aa)) folds into the ABC transporter domain. An ATP-binding site is contributed by 387-394 (GRSGSGKS).

Belongs to the ABC transporter superfamily. Lipid exporter (TC 3.A.1.106) family. Homodimer.

Its subcellular location is the cell inner membrane. The catalysed reaction is ATP + H2O + lipid A-core oligosaccharideSide 1 = ADP + phosphate + lipid A-core oligosaccharideSide 2.. Functionally, involved in lipopolysaccharide (LPS) biosynthesis. Translocates lipid A-core from the inner to the outer leaflet of the inner membrane. Transmembrane domains (TMD) form a pore in the inner membrane and the ATP-binding domain (NBD) is responsible for energy generation. This Aromatoleum aromaticum (strain DSM 19018 / LMG 30748 / EbN1) (Azoarcus sp. (strain EbN1)) protein is ATP-dependent lipid A-core flippase.